The sequence spans 233 residues: Cobalt-containing nitrile hydratase subunit beta (233 aa).

The protein belongs to the nitrile hydratase subunit beta family. In terms of assembly, heterotetramer of two alpha and two beta chains.

It catalyses the reaction an aliphatic primary amide = an aliphatic nitrile + H2O. NHase catalyzes the hydration of various nitrile compounds to the corresponding amides. In Pseudonocardia thermophila, this protein is Cobalt-containing nitrile hydratase subunit beta.